Reading from the N-terminus, the 127-residue chain is Acetylcholine receptor subunit alpha (127 aa).

The Extracellular portion of the chain corresponds to A1 to C127. Cysteines 33 and 47 form a disulfide. 2 N-linked (GlcNAc...) asparagine glycosylation sites follow: N46 and N94. A disulfide bridge connects residues C97 and C98.

This sequence belongs to the ligand-gated ion channel (TC 1.A.9) family. Acetylcholine receptor (TC 1.A.9.1) subfamily. Alpha-1/CHRNA1 sub-subfamily. One of the alpha chains that assemble within the acetylcholine receptor, a pentamer of two alpha chains, a beta, a delta, and a gamma or epsilon chains.

It is found in the postsynaptic cell membrane. The protein localises to the cell membrane. It carries out the reaction K(+)(in) = K(+)(out). The enzyme catalyses Na(+)(in) = Na(+)(out). Its function is as follows. Upon acetylcholine binding, the AChR responds by an extensive change in conformation that affects all subunits and leads to opening of an ion-conducting channel across the plasma membrane. Does not bind alpha-bungarotoxin. The protein is Acetylcholine receptor subunit alpha (CHRNA1) of Natrix tessellata (Dice snake).